The following is a 157-amino-acid chain: MRALYPGSFDPLTLGHLDLIERGCALFGEVVVAVLSNPAKTPAFTLQQRFNQIHVATAHCKGVSVISFDGLTVRCARHNQVDLILRGLRAMSDFEYELQIAHTNRSLAPDFETIFLATAAHHSFLSSSMVKEVARFGGNIDHMVPEVVAQDLHRLFN.

Residue Ser-8 participates in substrate binding. ATP-binding positions include 8–9 (SF) and His-16. Positions 40, 72, and 86 each coordinate substrate. ATP contacts are provided by residues 87-89 (GLR), Glu-97, and 122-128 (HSFLSSS).

It belongs to the bacterial CoaD family. In terms of assembly, homohexamer. Requires Mg(2+) as cofactor.

It localises to the cytoplasm. The catalysed reaction is (R)-4'-phosphopantetheine + ATP + H(+) = 3'-dephospho-CoA + diphosphate. The protein operates within cofactor biosynthesis; coenzyme A biosynthesis; CoA from (R)-pantothenate: step 4/5. Reversibly transfers an adenylyl group from ATP to 4'-phosphopantetheine, yielding dephospho-CoA (dPCoA) and pyrophosphate. In Prochlorococcus marinus (strain MIT 9303), this protein is Phosphopantetheine adenylyltransferase.